A 216-amino-acid polypeptide reads, in one-letter code: Ribose-5-phosphate isomerase A (216 aa).

Substrate is bound by residues 26-29 (TGST), 79-82 (DGAD), and 92-95 (KGGG). The active-site Proton acceptor is the glutamate 101. Position 119 (lysine 119) interacts with substrate.

It belongs to the ribose 5-phosphate isomerase family. In terms of assembly, homodimer.

The catalysed reaction is aldehydo-D-ribose 5-phosphate = D-ribulose 5-phosphate. Its pathway is carbohydrate degradation; pentose phosphate pathway; D-ribose 5-phosphate from D-ribulose 5-phosphate (non-oxidative stage): step 1/1. Catalyzes the reversible conversion of ribose-5-phosphate to ribulose 5-phosphate. This is Ribose-5-phosphate isomerase A from Legionella pneumophila subsp. pneumophila (strain Philadelphia 1 / ATCC 33152 / DSM 7513).